The primary structure comprises 337 residues: MATASPAADGGRGRPWEGGLVSWPPAPPLTLPWTWMGPSWGQHPGHWGFPALTDPSASPAASLGIFEVRRVLDASGCSMLAPLQTGAARFSSYLLSRARKVLGSHLLSPCGVPELCSISTRKLAAHGFGAAMAAMVPFPPQRYHYFLVLDFEATCDKPQIHPQEIIEFPILKLNGRTMEIESTFHMYVQPVVHPQLTPFCTELTGIIQAMVDGQPSLQQVLERVDEWMAKEGLLDPNVKSIFVTCGDWDLKVMLPGQCHYLGLPVADYFKQWINLKKAYSFAMGCWPKNGLLDMNKGLSLQHIGRPHSGIDDCKNIANIMKTLAYRGFIFKQTSKPF.

The region spanning F146–M320 is the Exonuclease domain. D150, E152, and D249 together coordinate Mg(2+). E152 functions as the Proton acceptor in the catalytic mechanism. Position 152 (E152) interacts with AMP. The Proton acceptor role is filled by H307. H307 is a binding site for AMP. Position 312 (D312) interacts with Mg(2+).

In terms of assembly, interacts with PRNP. Requires Mg(2+) as cofactor. Highly expressed in the brain, heart, thyroid and testis. Expressed at low levels in the muscle cells, liver, pancreas and kidney.

This Mus musculus (Mouse) protein is ERI1 exoribonuclease 3 (Eri3).